The following is a 699-amino-acid chain: Long-chain-fatty-acid--CoA ligase 1 (699 aa).

Residue Met1 is modified to N-acetylmethionine. Position 9 is a 3'-nitrotyrosine (Tyr9). A helical; Signal-anchor for type III membrane protein transmembrane segment spans residues Leu25–Ala45. The Cytoplasmic segment spans residues Thr46 to Ile699. Tyr85 is modified (phosphotyrosine). Tyr86 carries the post-translational modification 3'-nitrotyrosine. The O-linked (GlcNAc) serine glycan is linked to Ser136. An N6-acetyllysine mark is found at Lys208, Lys357, and Lys387. Residue Ser621 is modified to Phosphoserine. N6-acetyllysine is present on Lys633.

Belongs to the ATP-dependent AMP-binding enzyme family. It depends on Mg(2+) as a cofactor.

It is found in the mitochondrion outer membrane. Its subcellular location is the peroxisome membrane. The protein localises to the microsome membrane. The protein resides in the endoplasmic reticulum membrane. It carries out the reaction a long-chain fatty acid + ATP + CoA = a long-chain fatty acyl-CoA + AMP + diphosphate. The enzyme catalyses (5Z,8Z,11Z,14Z)-eicosatetraenoate + ATP + CoA = (5Z,8Z,11Z,14Z)-eicosatetraenoyl-CoA + AMP + diphosphate. It catalyses the reaction 3,7,11,15-tetramethylhexadecanoate + ATP + CoA = phytanoyl-CoA + AMP + diphosphate. The catalysed reaction is hexadecanoate + ATP + CoA = hexadecanoyl-CoA + AMP + diphosphate. It carries out the reaction (E)-hexadec-2-enoate + ATP + CoA = (2E)-hexadecenoyl-CoA + AMP + diphosphate. The enzyme catalyses 2,6,10,14-tetramethylpentadecanoate + ATP + CoA = pristanoyl-CoA + AMP + diphosphate. It catalyses the reaction 14,15-epoxy-(5Z,8Z,11Z)-eicosatrienoate + ATP + CoA = 14,15-epoxy-(5Z,8Z,11Z)-eicosatrienoyl-CoA + AMP + diphosphate. The catalysed reaction is 5-hydroxy-(6E,8Z,11Z,14Z)-eicosatetraenoate + ATP + CoA = 5-hydroxy-(6E,8Z,11Z,14Z)-eicosatetraenoyl-CoA + AMP + diphosphate. It carries out the reaction 12-hydroxy-(5Z,8Z,10E,14Z)-eicosatetraenoate + ATP + CoA = 12-hydroxy-(5Z,8Z,10E,14Z)-eicosatetraenoyl-CoA + AMP + diphosphate. The enzyme catalyses 15-hydroxy-(5Z,8Z,11Z,13E)-eicosatetraenoate + ATP + CoA = 15-hydroxy-(5Z,8Z,11Z,13E)-eicosatetraenoyl-CoA + AMP + diphosphate. It catalyses the reaction (9Z)-octadecenoate + ATP + CoA = (9Z)-octadecenoyl-CoA + AMP + diphosphate. Inhibited at high temperature and by arachidonate. Catalyzes the conversion of long-chain fatty acids to their active form acyl-CoAs for both synthesis of cellular lipids, and degradation via beta-oxidation. Preferentially uses palmitoleate, oleate and linoleate. Preferentially activates arachidonate than epoxyeicosatrienoic acids (EETs) or hydroxyeicosatrienoic acids (HETEs). The protein is Long-chain-fatty-acid--CoA ligase 1 of Mus musculus (Mouse).